The following is a 60-amino-acid chain: U20-myrmicitoxin-Mri1a (60 aa).

The first 24 residues, 1–24 (MKSVILLFAVIAIIVAVIIPAING), serve as a signal peptide directing secretion. The propeptide occupies 25–34 (ESSSNPSANA).

The protein belongs to the formicidae venom precursor-01 superfamily. In terms of tissue distribution, expressed by the venom gland.

The protein localises to the secreted. Induces paralysis 5 minutes after injection into blowflies (L.caesar), and then death within 24 hours. May have antimicrobial properties, like most ant linear peptides. This is U20-myrmicitoxin-Mri1a from Manica rubida (European giant red ant).